Here is a 325-residue protein sequence, read N- to C-terminus: Protease HtpX homolog 2 (325 aa).

The next 2 helical transmembrane spans lie at 10 to 30 (LNMALATLGITLLGFALALAV) and 41 to 61 (VGLILSILIFIFFLNIIQWLF). A Zn(2+)-binding site is contributed by histidine 147. Glutamate 148 is an active-site residue. Histidine 151 is a Zn(2+) binding site. 2 helical membrane passes run 159 to 179 (LLMAVGLIPALIYYLGWWLFW) and 196 to 216 (LVFLLGIIMMAVSFVFQLLVL). Residue glutamate 223 coordinates Zn(2+).

It belongs to the peptidase M48B family. Requires Zn(2+) as cofactor.

It is found in the cell membrane. This chain is Protease HtpX homolog 2, found in Saccharolobus solfataricus (strain ATCC 35092 / DSM 1617 / JCM 11322 / P2) (Sulfolobus solfataricus).